We begin with the raw amino-acid sequence, 116 residues long: Large ribosomal subunit protein bL17 (116 aa).

This sequence belongs to the bacterial ribosomal protein bL17 family. In terms of assembly, part of the 50S ribosomal subunit. Contacts protein L32.

The sequence is that of Large ribosomal subunit protein bL17 from Gloeothece citriformis (strain PCC 7424) (Cyanothece sp. (strain PCC 7424)).